The chain runs to 485 residues: Cysteine--tRNA ligase (485 aa).

Residue Cys-27 participates in Zn(2+) binding. Positions 29 to 39 match the 'HIGH' region motif; that stretch reads ITAYDLCHIGH. Cys-208, His-233, and Glu-237 together coordinate Zn(2+). The 'KMSKS' region motif lies at 265–269; it reads KMSKS. Lys-268 contributes to the ATP binding site.

It belongs to the class-I aminoacyl-tRNA synthetase family. In terms of assembly, monomer. Zn(2+) is required as a cofactor.

The protein resides in the cytoplasm. The enzyme catalyses tRNA(Cys) + L-cysteine + ATP = L-cysteinyl-tRNA(Cys) + AMP + diphosphate. The chain is Cysteine--tRNA ligase from Solidesulfovibrio magneticus (strain ATCC 700980 / DSM 13731 / RS-1) (Desulfovibrio magneticus).